The following is a 427-amino-acid chain: Ribosomal protein uS12 methylthiotransferase RimO (427 aa).

The 116-residue stretch at 1-116 (MNFYVDVLGC…IAENIGKESI (116 aa)) folds into the MTTase N-terminal domain. [4Fe-4S] cluster is bound by residues Cys-10, Cys-46, Cys-79, Cys-145, Cys-149, and Cys-152. The region spanning 131 to 360 (VDEKQYAYVK…MEEQSKISFE (230 aa)) is the Radical SAM core domain. The region spanning 363 to 426 (EKMVGKTFKV…VYDLEGKIVE (64 aa)) is the TRAM domain.

This sequence belongs to the methylthiotransferase family. RimO subfamily. [4Fe-4S] cluster serves as cofactor.

It localises to the cytoplasm. The catalysed reaction is L-aspartate(89)-[ribosomal protein uS12]-hydrogen + (sulfur carrier)-SH + AH2 + 2 S-adenosyl-L-methionine = 3-methylsulfanyl-L-aspartate(89)-[ribosomal protein uS12]-hydrogen + (sulfur carrier)-H + 5'-deoxyadenosine + L-methionine + A + S-adenosyl-L-homocysteine + 2 H(+). Functionally, catalyzes the methylthiolation of an aspartic acid residue of ribosomal protein uS12. The chain is Ribosomal protein uS12 methylthiotransferase RimO from Thermosipho africanus (strain TCF52B).